A 441-amino-acid chain; its full sequence is MTGEKLLYIETFGCQMNVSDSEKVASLLRGEGYSQTPDSSEADLIIVNTCSVRAKAEHKVYSYLGRFRKLKRDRRLLLGVGGCVAQQEGERLLKRVPWLDLVFGTHNLHLLPEMVRAAEQGERRAAVDFIDNEARLDLFPQADEGGGVTRFVTVMQGCDNFCSYCIVPYVRGREISRRSVEIIGEIRSAVAGGVREVTLLGQNVNSYGLKTPGELSFAGLLREISAIDGLERIRFTTSHPKDISPELIACFAELPKLCGHIHLPAQAGSDSILARMNRGYTRQEYLEKVAALRAARPEILITGDIIVGFPGETEADFLQTLSLMEEVRYTDIFSFAYSPRPETAAASLGDRIMRKETTERLERVQGLQRDMTIERHAGFVGTCQAVLVEGMSKRGDQLYGRTDGNLIVNFAGNPSLAGSLVDVRITRGYPNSLLGELAVFQ.

An MTTase N-terminal domain is found at 5–120 (KLLYIETFGC…LPEMVRAAEQ (116 aa)). [4Fe-4S] cluster is bound by residues C14, C50, C83, C158, C162, and C165. The 231-residue stretch at 144 to 374 (EGGGVTRFVT…QGLQRDMTIE (231 aa)) folds into the Radical SAM core domain. One can recognise a TRAM domain in the interval 377 to 439 (AGFVGTCQAV…PNSLLGELAV (63 aa)).

Belongs to the methylthiotransferase family. MiaB subfamily. In terms of assembly, monomer. [4Fe-4S] cluster is required as a cofactor.

Its subcellular location is the cytoplasm. The enzyme catalyses N(6)-dimethylallyladenosine(37) in tRNA + (sulfur carrier)-SH + AH2 + 2 S-adenosyl-L-methionine = 2-methylsulfanyl-N(6)-dimethylallyladenosine(37) in tRNA + (sulfur carrier)-H + 5'-deoxyadenosine + L-methionine + A + S-adenosyl-L-homocysteine + 2 H(+). Catalyzes the methylthiolation of N6-(dimethylallyl)adenosine (i(6)A), leading to the formation of 2-methylthio-N6-(dimethylallyl)adenosine (ms(2)i(6)A) at position 37 in tRNAs that read codons beginning with uridine. The protein is tRNA-2-methylthio-N(6)-dimethylallyladenosine synthase of Geobacter metallireducens (strain ATCC 53774 / DSM 7210 / GS-15).